Reading from the N-terminus, the 87-residue chain is Small ribosomal subunit protein bS18B (87 aa).

Belongs to the bacterial ribosomal protein bS18 family. As to quaternary structure, part of the 30S ribosomal subunit. Forms a tight heterodimer with protein bS6.

Functionally, binds as a heterodimer with protein bS6 to the central domain of the 16S rRNA, where it helps stabilize the platform of the 30S subunit. The protein is Small ribosomal subunit protein bS18B of Mycobacterium marinum (strain ATCC BAA-535 / M).